Consider the following 566-residue polypeptide: Bacillolysin (566 aa).

An N-terminal signal peptide occupies residues 1 to 27; that stretch reads MKKKSLALVLATGMAVTTFGGTGSAFA. Positions 28 to 249 are cleaved as a propeptide — activation peptide; that stretch reads DSKNVLSTKK…KQDAKAVVKP (222 aa). D307, D309, V311, and D388 together coordinate Ca(2+). H392 is a binding site for Zn(2+). Residue E393 is part of the active site. The Zn(2+) site is built by H396 and E416. Ca(2+) is bound by residues E427, N433, D435, E437, E440, Y443, T444, K447, and D450. H481 functions as the Proton donor in the catalytic mechanism.

This sequence belongs to the peptidase M4 family. Requires Ca(2+) as cofactor. Zn(2+) serves as cofactor.

The protein resides in the secreted. It carries out the reaction Similar, but not identical, to that of thermolysin.. Functionally, extracellular zinc metalloprotease. The sequence is that of Bacillolysin (npr) from Bacillus cereus.